Consider the following 527-residue polypeptide: Probable feruloyl esterase B (527 aa).

An N-terminal signal peptide occupies residues 1–19; that stretch reads MALLRHLLPVLTVGSAVQS. Intrachain disulfides connect Cys31–Cys76 and Cys65–Cys115. 3 N-linked (GlcNAc...) asparagine glycosylation sites follow: Asn56, Asn86, and Asn139. Disulfide bonds link Cys188–Cys442, Cys257–Cys274, Cys283–Cys292, and Cys504–Cys526. Ser189 (acyl-ester intermediate) is an active-site residue. Ca(2+) is bound by residues Asp258, Asp261, Ala263, Asp265, and Ile267. An N-linked (GlcNAc...) asparagine glycan is attached at Asn277. Asn312 and Asn356 each carry an N-linked (GlcNAc...) asparagine glycan. Active-site charge relay system residues include Asp401 and His441.

The protein belongs to the tannase family.

Its subcellular location is the secreted. It carries out the reaction feruloyl-polysaccharide + H2O = ferulate + polysaccharide.. Its function is as follows. Involved in degradation of plant cell walls. Hydrolyzes the feruloyl-arabinose ester bond in arabinoxylans as well as the feruloyl-galactose and feruloyl-arabinose ester bonds in pectin. The chain is Probable feruloyl esterase B (faeB) from Emericella nidulans (strain FGSC A4 / ATCC 38163 / CBS 112.46 / NRRL 194 / M139) (Aspergillus nidulans).